A 378-amino-acid polypeptide reads, in one-letter code: Transcription initiation factor IIA subunit 1 (378 aa).

At Ala2 the chain carries N-acetylalanine. Composition is skewed to low complexity over residues 69–79 (QVQQQHQPQQQ), 89–106 (QQAQPQQTVPQQAQTQQV), and 247–281 (PAQAPMPAAGQQQPQAQPAQQQAPLVLQVDGTGDT). Disordered stretches follow at residues 69–108 (QVQQQHQPQQQQHHHHHHQHQQAQPQQTVPQQAQTQQVLI) and 247–331 (PAQA…QELF). Residues Ser282, Ser283, Ser318, and Ser323 each carry the phosphoserine; by TAF1 modification. A compositionally biased stretch (acidic residues) spans 282 to 331 (SSEEDEDEEEDYDDDEEEDKEKDGAEDGQVEEEPLNSEDDVSDEEGQELF). DNA contacts are provided by His345 and Arg346.

The protein belongs to the TFIIA subunit 1 family. As to quaternary structure, TFIIA is a heterodimer of the large unprocessed subunit 1 and a small subunit gamma. It was originally believed to be a heterotrimer of an alpha (p35), a beta (p19) and a gamma subunit (p12). TFIIA forms a complex with TBP. Part of TBP-based Pol II pre-initiation complex (PIC), in which Pol II core assembles with general transcription factors and other specific initiation factors including GTF2E1, GTF2E2, GTF2F1, GTF2F2, TCEA1, ERCC2, ERCC3, GTF2H2, GTF2H3, GTF2H4, GTF2H5, GTF2A1, GTF2A2, GTF2B and TBP; this large multi-subunit PIC complex mediates DNA unwinding and targets Pol II core to the transcription start site where the first phosphodiester bond forms. The alpha and beta subunits are postranslationally produced from the precursor form by TASP1. The cleavage promotes proteasomal degradation. Expressed in pachytene spermatocytes and spermatids.

It is found in the nucleus. Functionally, TFIIA is a component of the transcription machinery of RNA polymerase II and plays an important role in transcriptional activation. TFIIA in a complex with TBP mediates transcriptional activity. The chain is Transcription initiation factor IIA subunit 1 (Gtf2a1) from Mus musculus (Mouse).